The following is a 157-amino-acid chain: SsrA-binding protein (157 aa).

The tract at residues 132 to 157 (VHDKRQAQKDKDWAREKDRLFKKAYK) is disordered. Residues 135-157 (KRQAQKDKDWAREKDRLFKKAYK) are compositionally biased toward basic and acidic residues.

It belongs to the SmpB family.

The protein localises to the cytoplasm. Functionally, required for rescue of stalled ribosomes mediated by trans-translation. Binds to transfer-messenger RNA (tmRNA), required for stable association of tmRNA with ribosomes. tmRNA and SmpB together mimic tRNA shape, replacing the anticodon stem-loop with SmpB. tmRNA is encoded by the ssrA gene; the 2 termini fold to resemble tRNA(Ala) and it encodes a 'tag peptide', a short internal open reading frame. During trans-translation Ala-aminoacylated tmRNA acts like a tRNA, entering the A-site of stalled ribosomes, displacing the stalled mRNA. The ribosome then switches to translate the ORF on the tmRNA; the nascent peptide is terminated with the 'tag peptide' encoded by the tmRNA and targeted for degradation. The ribosome is freed to recommence translation, which seems to be the essential function of trans-translation. This chain is SsrA-binding protein, found in Francisella tularensis subsp. novicida (strain U112).